The primary structure comprises 139 residues: FAD synthase (139 aa).

Residues 9 to 10 (TF), 14 to 17 (HPGH), and aspartate 92 contribute to the ATP site.

It belongs to the archaeal FAD synthase family. Homodimer. A divalent metal cation serves as cofactor.

The catalysed reaction is FMN + ATP + H(+) = FAD + diphosphate. It participates in cofactor biosynthesis; FAD biosynthesis; FAD from FMN: step 1/1. Its function is as follows. Catalyzes the transfer of the AMP portion of ATP to flavin mononucleotide (FMN) to produce flavin adenine dinucleotide (FAD) coenzyme. The chain is FAD synthase from Methanosarcina barkeri (strain Fusaro / DSM 804).